The following is a 234-amino-acid chain: Peptidyl-prolyl cis-trans isomerase, rhodopsin-specific isozyme (234 aa).

The first 19 residues, 1–19, serve as a signal peptide directing secretion; the sequence is MNILKILILLELIYTCVSG. The PPIase cyclophilin-type domain maps to 29-187; it reads YMDVKHQKKP…DPVIIVNCGE (159 aa). Residue Asn-67 is glycosylated (N-linked (GlcNAc...) asparagine). Residues 202-222 traverse the membrane as a helical segment; sequence ILGWIKAAGLPFCSSFIVLMI.

The protein belongs to the cyclophilin-type PPIase family. In terms of tissue distribution, expressed specifically in photoreceptor cells.

It is found in the membrane. It catalyses the reaction [protein]-peptidylproline (omega=180) = [protein]-peptidylproline (omega=0). Its function is as follows. PPIases accelerate the folding of proteins. It catalyzes the cis-trans isomerization of proline imidic peptide bonds in oligopeptides. Acts on the folding of rhodopsin RH1 and RH2 (but not RH3) and is required for visual transduction. In Calliphora vicina (Blue blowfly), this protein is Peptidyl-prolyl cis-trans isomerase, rhodopsin-specific isozyme (NINAA).